The sequence spans 203 residues: Thymidylate kinase (203 aa).

Position 7-14 (7-14 (GGEGAGKT)) interacts with ATP.

This sequence belongs to the thymidylate kinase family.

The catalysed reaction is dTMP + ATP = dTDP + ADP. Its function is as follows. Phosphorylation of dTMP to form dTDP in both de novo and salvage pathways of dTTP synthesis. The polypeptide is Thymidylate kinase (Chlamydia trachomatis serovar L2 (strain ATCC VR-902B / DSM 19102 / 434/Bu)).